The sequence spans 1097 residues: DNA-directed RNA polymerase subunit beta (1097 aa).

Residues 1072 to 1097 form a disordered region; it reads QDVNPRRSTPSRPTYESLGVADYDED.

This sequence belongs to the RNA polymerase beta chain family. In cyanobacteria the RNAP catalytic core is composed of 2 alpha, 1 beta, 1 beta', 1 gamma and 1 omega subunit. When a sigma factor is associated with the core the holoenzyme is formed, which can initiate transcription.

It carries out the reaction RNA(n) + a ribonucleoside 5'-triphosphate = RNA(n+1) + diphosphate. In terms of biological role, DNA-dependent RNA polymerase catalyzes the transcription of DNA into RNA using the four ribonucleoside triphosphates as substrates. The chain is DNA-directed RNA polymerase subunit beta from Synechococcus sp. (strain CC9605).